The primary structure comprises 301 residues: Probable 5-dehydro-4-deoxyglucarate dehydratase (301 aa).

Belongs to the DapA family.

It carries out the reaction 5-dehydro-4-deoxy-D-glucarate + H(+) = 2,5-dioxopentanoate + CO2 + H2O. Its pathway is carbohydrate acid metabolism; D-glucarate degradation; 2,5-dioxopentanoate from D-glucarate: step 2/2. The sequence is that of Probable 5-dehydro-4-deoxyglucarate dehydratase from Allorhizobium ampelinum (strain ATCC BAA-846 / DSM 112012 / S4) (Agrobacterium vitis (strain S4)).